A 441-amino-acid polypeptide reads, in one-letter code: Proline--tRNA ligase (441 aa).

It belongs to the class-II aminoacyl-tRNA synthetase family. ProS type 2 subfamily. As to quaternary structure, homodimer.

The protein localises to the cytoplasm. The catalysed reaction is tRNA(Pro) + L-proline + ATP = L-prolyl-tRNA(Pro) + AMP + diphosphate. Functionally, catalyzes the attachment of proline to tRNA(Pro) in a two-step reaction: proline is first activated by ATP to form Pro-AMP and then transferred to the acceptor end of tRNA(Pro). This Bartonella bacilliformis (strain ATCC 35685 / KC583 / Herrer 020/F12,63) protein is Proline--tRNA ligase.